Reading from the N-terminus, the 1027-residue chain is Fibril-forming collagen alpha chain (1027 aa).

The interval 1 to 12 (YRAGPRYIQAQV) is nonhelical region (N-terminal). Residues 1–1027 (YRAGPRYIQA…GPPGNSDYGA (1027 aa)) are disordered. Residues 13–1023 (GPIGPRGPPG…PGPPGPPGNS (1011 aa)) are triple-helical region. Over residues 17-26 (PRGPPGPPGS) the composition is skewed to pro residues. 4-hydroxyproline; partial occurs at positions 21 and 24. 4-hydroxyproline is present on residues Pro-27 and Pro-39. Pro-53 carries the post-translational modification 3-hydroxyproline; partial. Pro-54 is subject to 4-hydroxyproline. Residues 63–72 (SGDDGRDGEP) are compositionally biased toward basic and acidic residues. A 4-hydroxyproline; partial modification is found at Pro-72. A compositionally biased stretch (gly residues) spans 73–91 (GPRGGIGPMGPRGAGGMPG). A 4-hydroxyproline mark is found at Pro-90 and Pro-93. A 5-hydroxylysine mark is found at Lys-96 and Lys-108. 2 O-linked (Gal...) hydroxylysine glycosylation sites follow: Lys-96 and Lys-108. Pro-123 and Pro-128 each carry 4-hydroxyproline; partial. Residue Pro-150 is modified to 4-hydroxyproline. Pro-161 is subject to 3-hydroxyproline; partial. Pro-162 bears the 4-hydroxyproline mark. At Pro-164 the chain carries 3-hydroxyproline; partial. Residues Pro-165, Pro-174, Pro-177, and Pro-180 each carry the 4-hydroxyproline modification. Over residues 168–182 (IGSTGSPGFPGTPGS) the composition is skewed to low complexity. 5-hydroxylysine occurs at positions 183 and 192. O-linked (Gal...) hydroxylysine glycosylation is present at Lys-192. 5 positions are modified to 4-hydroxyproline: Pro-207, Pro-216, Pro-219, Pro-228, and Pro-237. Positions 227 to 249 (EPGASGESGLPGPSGFPGPRGMP) are enriched in low complexity. 4-hydroxyproline; partial is present on Pro-243. 4-hydroxyproline is present on residues Pro-249 and Pro-255. Residues 259–268 (GAKGDGGPTG) show a composition bias toward gly residues. Lys-261 carries the post-translational modification 5-hydroxylysine. An O-linked (Gal...) hydroxylysine glycan is attached at Lys-261. 2 positions are modified to 4-hydroxyproline; partial: Pro-273 and Pro-276. The residue at position 279 (Lys-279) is a 5-hydroxylysine. Lys-279 is a glycosylation site (O-linked (Gal...) hydroxylysine). Pro-285, Pro-291, and Pro-303 each carry 4-hydroxyproline; partial. Pro-306, Pro-312, Pro-321, Pro-327, and Pro-339 each carry 4-hydroxyproline. 5-hydroxylysine is present on Lys-342. The residue at position 348 (Pro-348) is a 4-hydroxyproline; partial. A 5-hydroxylysine; partial modification is found at Lys-351. 3 positions are modified to 4-hydroxyproline: Pro-366, Pro-372, and Pro-375. A compositionally biased stretch (basic and acidic residues) spans 380–396 (RPGKDGRPGIRGKDGKQ). The residue at position 381 (Pro-381) is a 4-hydroxyproline; partial. Residue Pro-387 is modified to 4-hydroxyproline. The span at 398–420 (EQGPQGPQGLAGLQGRAGPPGAR) shows a compositional bias: low complexity. The residue at position 416 (Pro-416) is a 3-hydroxyproline; partial. Pro-417, Pro-423, Pro-429, and Pro-432 each carry 4-hydroxyproline. Positions 437 to 446 (EQGDAGKDGE) are enriched in basic and acidic residues. Low complexity predominate over residues 447–480 (TGAAGPPGAAGPTGARGPPGPRGQQGFQGLAGAQ). 4-hydroxyproline occurs at positions 453, 465, and 483. 3 positions are modified to 4-hydroxyproline; partial: Pro-500, Pro-503, and Pro-506. Over residues 502–511 (GPAGPGGERG) the composition is skewed to gly residues. 4-hydroxyproline occurs at positions 513 and 525. Positions 527-543 (ERGATGPAGPTGSPGVA) are enriched in low complexity. A 4-hydroxyproline; partial mark is found at Pro-533 and Pro-536. Pro-540 is modified (4-hydroxyproline). 5-hydroxylysine is present on Lys-546. The residue at position 551 (Pro-551) is a 3-hydroxyproline; partial. 2 positions are modified to 4-hydroxyproline: Pro-552 and Pro-561. 5-hydroxylysine occurs at positions 567 and 573. Residue Lys-573 is glycosylated (O-linked (Gal...) hydroxylysine). A compositionally biased stretch (basic and acidic residues) spans 575–599 (SRGDIGPRGKAGERGKDGERGERGE). Pro-603 carries the post-translational modification 4-hydroxyproline. Lys-612 carries the 5-hydroxylysine modification. The O-linked (Gal...) hydroxylysine glycan is linked to Lys-612. 4-hydroxyproline; partial is present on Pro-621. Pro-627 carries the post-translational modification 4-hydroxyproline. Low complexity predominate over residues 635-644 (PAGSQGIQGQ). Residue Pro-645 is modified to 4-hydroxyproline; partial. A 3-hydroxyproline; partial modification is found at Pro-647. At Pro-648 the chain carries 4-hydroxyproline. Lys-657 carries the post-translational modification 5-hydroxylysine. Residue Lys-657 is glycosylated (O-linked (Gal...) hydroxylysine). 6 positions are modified to 4-hydroxyproline: Pro-663, Pro-708, Pro-711, Pro-714, Pro-717, and Pro-723. A compositionally biased stretch (low complexity) spans 698–710 (ETGAQGEIGLPGS). The span at 714–726 (PGLPGPSGQPGPS) shows a compositional bias: pro residues. Position 738 is a 5-hydroxylysine (Lys-738). The O-linked (Gal...) hydroxylysine glycan is linked to Lys-738. 4-hydroxyproline occurs at positions 744 and 759. Over residues 750–771 (QGDRGSDGEPGRDGTKGERGED) the composition is skewed to basic and acidic residues. Position 765 is a 5-hydroxylysine (Lys-765). O-linked (Gal...) hydroxylysine glycosylation is present at Lys-765. Residue Pro-773 is modified to 3-hydroxyproline; partial. 4-hydroxyproline is present on residues Pro-774, Pro-783, and Pro-792. A compositionally biased stretch (gly residues) spans 802–814 (GPMGGQGMKGDGG). Lys-810 carries the post-translational modification 5-hydroxylysine. A glycan (O-linked (Gal...) hydroxylysine) is linked at Lys-810. A 3-hydroxyproline; partial modification is found at Pro-815. A 4-hydroxyproline mark is found at Pro-816, Pro-843, Pro-849, Pro-855, Pro-861, Pro-867, Pro-888, Pro-894, Pro-903, and Pro-915. The segment covering 828–848 (AGPQGPTGPSGQAGAPGQEGA) has biased composition (low complexity). Residues 884–894 (QRGLPGAAGPP) show a composition bias toward low complexity. Residues 911 to 927 (PVGAPGSQGPAGIMGMK) are compositionally biased toward low complexity. Lys-927 carries the 5-hydroxylysine modification. A glycan (O-linked (Gal...) hydroxylysine) is linked at Lys-927. Lys-933 carries the 5-hydroxylysine; partial modification. 5-hydroxylysine occurs at positions 936 and 939. Lys-936 carries an O-linked (Gal...) hydroxylysine glycan. The segment covering 942–962 (TGLPGLQGLQGTPGHSGESGP) has biased composition (low complexity). Pro-945 bears the 4-hydroxyproline mark. Pro-954 carries the 4-hydroxyproline; partial modification. A 4-hydroxyproline mark is found at Pro-963 and Pro-966. A compositionally biased stretch (gly residues) spans 973–982 (GEAGGRGSQG). Low complexity predominate over residues 983–1001 (PPGKDGQPGPSGRVGPRGP). A 4-hydroxyproline mark is found at Pro-984 and Pro-990. The residue at position 1010 (Pro-1010) is a 3-hydroxyproline; partial. The span at 1010–1020 (PPGPPGPPGPP) shows a compositional bias: pro residues. Residue Pro-1011 is modified to 4-hydroxyproline. Residue Pro-1013 is modified to 3-hydroxyproline; partial. The residue at position 1014 (Pro-1014) is a 4-hydroxyproline. The residue at position 1016 (Pro-1016) is a 3-hydroxyproline; partial. Pro-1017 carries the post-translational modification 4-hydroxyproline. 3-hydroxyproline; partial is present on Pro-1019. A 4-hydroxyproline modification is found at Pro-1020. A nonhelical region (C-terminal) region spans residues 1024-1027 (DYGA).

In terms of assembly, homotetramer.

The protein localises to the secreted. It localises to the extracellular space. The protein resides in the extracellular matrix. In terms of biological role, fibril-forming collagen. This chain is Fibril-forming collagen alpha chain, found in Riftia pachyptila (Vent tube worm).